A 292-amino-acid chain; its full sequence is Bifunctional protein FolD (292 aa).

NADP(+)-binding positions include 166–168, Ser-191, and Ile-232; that span reads GRS.

It belongs to the tetrahydrofolate dehydrogenase/cyclohydrolase family. As to quaternary structure, homodimer.

The enzyme catalyses (6R)-5,10-methylene-5,6,7,8-tetrahydrofolate + NADP(+) = (6R)-5,10-methenyltetrahydrofolate + NADPH. It catalyses the reaction (6R)-5,10-methenyltetrahydrofolate + H2O = (6R)-10-formyltetrahydrofolate + H(+). The protein operates within one-carbon metabolism; tetrahydrofolate interconversion. Catalyzes the oxidation of 5,10-methylenetetrahydrofolate to 5,10-methenyltetrahydrofolate and then the hydrolysis of 5,10-methenyltetrahydrofolate to 10-formyltetrahydrofolate. This is Bifunctional protein FolD from Wolbachia pipientis wMel.